An 880-amino-acid chain; its full sequence is Valine--tRNA ligase (880 aa).

The 'HIGH' region signature appears at 47–57; sequence PNITGKLHLGH. Positions 526–530 match the 'KMSKS' region motif; the sequence is KMSKS. ATP is bound at residue K529. Positions 810–845 form a coiled coil; that stretch reads LLDLVDREKELERLNKEKTKLEGEILRVEKKLSNER.

The protein belongs to the class-I aminoacyl-tRNA synthetase family. ValS type 1 subfamily. As to quaternary structure, monomer.

It is found in the cytoplasm. The catalysed reaction is tRNA(Val) + L-valine + ATP = L-valyl-tRNA(Val) + AMP + diphosphate. In terms of biological role, catalyzes the attachment of valine to tRNA(Val). As ValRS can inadvertently accommodate and process structurally similar amino acids such as threonine, to avoid such errors, it has a 'posttransfer' editing activity that hydrolyzes mischarged Thr-tRNA(Val) in a tRNA-dependent manner. The chain is Valine--tRNA ligase from Clostridium perfringens (strain 13 / Type A).